Consider the following 434-residue polypeptide: Beta-glucuronosyltransferase GlcAT14B (434 aa).

Over 1–21 the chain is Cytoplasmic; it reads MKKLKSYYMQVRNQQQSLDRK. A signal-anchor for type II membrane protein membrane pass occupies residues 22-42; it reads WILPLAIGSICSLFLLLLTNL. Residues 43-434 lie on the Lumenal side of the membrane; it reads ASSSGQTRLI…TENFRPRQCR (392 aa). N-linked (GlcNAc...) asparagine glycosylation is found at Asn-138, Asn-187, Asn-316, and Asn-392.

It belongs to the glycosyltransferase 14 family.

The protein resides in the golgi apparatus membrane. In terms of biological role, beta-glucuronosyltransferase involved in the biosynthesis of type II arabinogalactan (AG). Modifies both the beta-1,6-linked galactan and beta-1,3-linked galactan present in type II AG. The chain is Beta-glucuronosyltransferase GlcAT14B from Arabidopsis thaliana (Mouse-ear cress).